The primary structure comprises 269 residues: Hydroxymethylpyrimidine/phosphomethylpyrimidine kinase (269 aa).

Gln-45 lines the 4-amino-5-hydroxymethyl-2-methylpyrimidine pocket.

The protein belongs to the ThiD family.

The catalysed reaction is 4-amino-5-hydroxymethyl-2-methylpyrimidine + ATP = 4-amino-2-methyl-5-(phosphooxymethyl)pyrimidine + ADP + H(+). It catalyses the reaction 4-amino-2-methyl-5-(phosphooxymethyl)pyrimidine + ATP = 4-amino-2-methyl-5-(diphosphooxymethyl)pyrimidine + ADP. It functions in the pathway cofactor biosynthesis; thiamine diphosphate biosynthesis; 4-amino-2-methyl-5-diphosphomethylpyrimidine from 5-amino-1-(5-phospho-D-ribosyl)imidazole: step 2/3. Its pathway is cofactor biosynthesis; thiamine diphosphate biosynthesis; 4-amino-2-methyl-5-diphosphomethylpyrimidine from 5-amino-1-(5-phospho-D-ribosyl)imidazole: step 3/3. Its function is as follows. Catalyzes the phosphorylation of hydroxymethylpyrimidine phosphate (HMP-P) to HMP-PP, and of HMP to HMP-P. In Helicobacter pylori (strain J99 / ATCC 700824) (Campylobacter pylori J99), this protein is Hydroxymethylpyrimidine/phosphomethylpyrimidine kinase (thiD).